Reading from the N-terminus, the 354-residue chain is Serum paraoxonase/lactonase 3 (354 aa).

A glycan (N-linked (GlcNAc...) asparagine) is linked at Asn-29. Residues Cys-42 and Cys-352 are joined by a disulfide bond. Ca(2+) is bound by residues Glu-53 and Asp-54. Residue His-114 is the Proton acceptor of the active site. Ile-116 lines the Ca(2+) pocket. Ser-165 carries the phosphoserine modification. The Ca(2+) site is built by Asn-167, Asp-168, Asn-223, Asp-268, and Asn-269. N-linked (GlcNAc...) asparagine glycans are attached at residues Asn-269 and Asn-323.

The protein belongs to the paraoxonase family. As to quaternary structure, homodimer. Ca(2+) serves as cofactor. The signal sequence is not cleaved.

The protein resides in the secreted. It localises to the extracellular space. It carries out the reaction a phenyl acetate + H2O = a phenol + acetate + H(+). The enzyme catalyses An aryl dialkyl phosphate + H2O = dialkyl phosphate + an aryl alcohol.. The catalysed reaction is an N-acyl-L-homoserine lactone + H2O = an N-acyl-L-homoserine + H(+). Its function is as follows. Has low activity towards the organophosphate paraxon and aromatic carboxylic acid esters. Rapidly hydrolyzes lactones such as statin prodrugs (e.g. lovastatin). Hydrolyzes aromatic lactones and 5- or 6-member ring lactones with aliphatic substituents but not simple lactones or those with polar substituents. This Homo sapiens (Human) protein is Serum paraoxonase/lactonase 3 (PON3).